The primary structure comprises 118 residues: Na(+)/H(+) antiporter subunit G1 (118 aa).

The next 3 helical transmembrane spans lie at 4-24, 38-58, and 60-80; these read IILI…SALA, AHAA…GTFL, and FIAT…FVLI.

Belongs to the CPA3 antiporters (TC 2.A.63) subunit G family. May form a heterooligomeric complex that consists of seven subunits: mnhA1, mnhB1, mnhC1, mnhD1, mnhE1, mnhF1 and mnhG1.

Its subcellular location is the cell membrane. Mnh complex is a Na(+)/H(+) antiporter involved in Na(+) excretion. The chain is Na(+)/H(+) antiporter subunit G1 (mnhG1) from Staphylococcus aureus (strain Mu3 / ATCC 700698).